Reading from the N-terminus, the 628-residue chain is Biosynthetic arginine decarboxylase (628 aa).

Lysine 99 carries the N6-(pyridoxal phosphate)lysine modification. Valine 279–tyrosine 289 provides a ligand contact to substrate.

This sequence belongs to the Orn/Lys/Arg decarboxylase class-II family. SpeA subfamily. Requires Mg(2+) as cofactor. Pyridoxal 5'-phosphate serves as cofactor.

The enzyme catalyses L-arginine + H(+) = agmatine + CO2. Functionally, catalyzes the biosynthesis of agmatine from arginine. The polypeptide is Biosynthetic arginine decarboxylase (Xylella fastidiosa (strain 9a5c)).